Consider the following 528-residue polypeptide: Abrin-a (528 aa).

Gln1 carries the post-translational modification Pyrrolidone carboxylic acid. Residue Glu164 is part of the active site. Intrachain disulfides connect Cys247-Cys269, Cys286-Cys305, and Cys329-Cys346. One can recognise a Ricin B-type lectin 1 domain in the interval 273 to 400 (YEPTVRIGGR…YLMRQGWRTG (128 aa)). One copy of the 1-alpha repeat lies at 283 to 325 (DGMCVDVYDNGYHNGNRIIMWKCKDRLEENQLWTLKSDKTIRS). One copy of the 1-beta repeat lies at 326–366 (NGKCLTTYGYAPGSYVMIYDCTSAVAEATYWEIWDNGTIIN). N-linked (GlcNAc...) asparagine glycans are attached at residues Asn361 and Asn401. The 1-gamma repeat unit spans residues 369–401 (SALVLSAESSSMGGTLTVQTNEYLMRQGWRTGN). A Ricin B-type lectin 2 domain is found at 403 to 527 (TSPFVTSISG…GKPNQIWLTL (125 aa)). A 2-alpha repeat occupies 414-449 (SDLCMQAQGSNVWMADCDSNKKEQQWALYTDGSIRS). Intrachain disulfides connect Cys417/Cys430 and Cys456/Cys473. One copy of the 2-beta repeat lies at 453-492 (TNNCLTSKDHKQGSTILLMGCSNGWASQRWVFKNDGSIYS). A 2-gamma repeat occupies 495–528 (DDMVMDVKGSDPSLKQIILWPYTGKPNQIWLTLF).

This sequence in the N-terminal section; belongs to the ribosome-inactivating protein family. Type 2 RIP subfamily. In terms of assembly, disulfide-linked dimer of A and B chains.

The enzyme catalyses Endohydrolysis of the N-glycosidic bond at one specific adenosine on the 28S rRNA.. Functionally, the A chain is responsible for inhibiting protein synthesis through the catalytic inactivation of 60S ribosomal subunits by removing adenine from position 4,324 of 28S rRNA. Abrin-a is more toxic than ricin. The B chain is a galactose-specific lectin that facilitates the binding of abrin to the cell membrane that precedes endocytosis. The polypeptide is Abrin-a (Abrus precatorius (Indian licorice)).